A 341-amino-acid chain; its full sequence is MAKVYYNGDVNEQVLEGKTVAIVGYGSQGHAHAQNLRESGVDVIIGLRPGKSWDKATEDGFSVYSVREASAKADIIMILSPDEHQPAIYKESIEPELTAGKALVFAHGFNIHFNQIVPPEHVDVFLAAPKGPGHLVRRTYTEGAGVPALIAVYQDATGQAKDIALAYAKQIGAARAGVLETTFKEETETDLFGEQAVLCGGTSALVKAGFETLVEAGYQPEIAYFECLHELKLIVDLMYEGGLEYMRYSISDTAQWGDFQAGPRIVTDETKAAMKEILSDIQKGKFAKGWILENKLNRPEYNAINEAEKNHPLEVVGRELREMMPFVKASKSKGVVANAKN.

Positions 2-181 (AKVYYNGDVN…GAARAGVLET (180 aa)) constitute a KARI N-terminal Rossmann domain. Residues 25 to 28 (YGSQ), Arg48, Ser52, and 82 to 85 (DEHQ) contribute to the NADP(+) site. The active site involves His107. Gly133 serves as a coordination point for NADP(+). Residues 182–327 (TFKEETETDL…RELREMMPFV (146 aa)) enclose the KARI C-terminal knotted domain. Residues Asp190, Glu194, Glu226, and Glu230 each coordinate Mg(2+). Ser251 serves as a coordination point for substrate.

It belongs to the ketol-acid reductoisomerase family. Mg(2+) is required as a cofactor.

The enzyme catalyses (2R)-2,3-dihydroxy-3-methylbutanoate + NADP(+) = (2S)-2-acetolactate + NADPH + H(+). It catalyses the reaction (2R,3R)-2,3-dihydroxy-3-methylpentanoate + NADP(+) = (S)-2-ethyl-2-hydroxy-3-oxobutanoate + NADPH + H(+). The protein operates within amino-acid biosynthesis; L-isoleucine biosynthesis; L-isoleucine from 2-oxobutanoate: step 2/4. It participates in amino-acid biosynthesis; L-valine biosynthesis; L-valine from pyruvate: step 2/4. Functionally, involved in the biosynthesis of branched-chain amino acids (BCAA). Catalyzes an alkyl-migration followed by a ketol-acid reduction of (S)-2-acetolactate (S2AL) to yield (R)-2,3-dihydroxy-isovalerate. In the isomerase reaction, S2AL is rearranged via a Mg-dependent methyl migration to produce 3-hydroxy-3-methyl-2-ketobutyrate (HMKB). In the reductase reaction, this 2-ketoacid undergoes a metal-dependent reduction by NADPH to yield (R)-2,3-dihydroxy-isovalerate. This Shouchella clausii (strain KSM-K16) (Alkalihalobacillus clausii) protein is Ketol-acid reductoisomerase (NADP(+)).